A 471-amino-acid chain; its full sequence is UDP-N-acetylmuramate--L-alanine ligase (471 aa).

114–120 (GTHGKTT) contacts ATP.

Belongs to the MurCDEF family.

The protein resides in the cytoplasm. It carries out the reaction UDP-N-acetyl-alpha-D-muramate + L-alanine + ATP = UDP-N-acetyl-alpha-D-muramoyl-L-alanine + ADP + phosphate + H(+). Its pathway is cell wall biogenesis; peptidoglycan biosynthesis. In terms of biological role, cell wall formation. In Methylobacterium sp. (strain 4-46), this protein is UDP-N-acetylmuramate--L-alanine ligase.